The chain runs to 382 residues: 3-dehydroquinate synthase (382 aa).

Residues 81-86 (EGEGSK), 115-119 (GVVGD), 139-140 (TS), Lys-152, and Lys-161 each bind NAD(+). Residues Glu-194, His-256, and His-274 each coordinate Zn(2+).

The protein belongs to the sugar phosphate cyclases superfamily. Dehydroquinate synthase family. It depends on Co(2+) as a cofactor. Requires Zn(2+) as cofactor. NAD(+) serves as cofactor.

The protein localises to the cytoplasm. It catalyses the reaction 7-phospho-2-dehydro-3-deoxy-D-arabino-heptonate = 3-dehydroquinate + phosphate. It participates in metabolic intermediate biosynthesis; chorismate biosynthesis; chorismate from D-erythrose 4-phosphate and phosphoenolpyruvate: step 2/7. In terms of biological role, catalyzes the conversion of 3-deoxy-D-arabino-heptulosonate 7-phosphate (DAHP) to dehydroquinate (DHQ). In Bradyrhizobium sp. (strain BTAi1 / ATCC BAA-1182), this protein is 3-dehydroquinate synthase.